Consider the following 64-residue polypeptide: Large ribosomal subunit protein bL35 (64 aa).

The tract at residues 1–41 (MPKMKSHSGASKRFKVSGKGKLLRQQANRRHLLEHKPSRRT) is disordered.

This sequence belongs to the bacterial ribosomal protein bL35 family.

The sequence is that of Large ribosomal subunit protein bL35 from Nocardia farcinica (strain IFM 10152).